The sequence spans 552 residues: 5'-AMP-activated protein kinase catalytic subunit alpha-2 (552 aa).

Residues 16-268 form the Protein kinase domain; the sequence is YVLGDTLGVG…IKDIREHEWF (253 aa). ATP contacts are provided by residues 22–30 and lysine 45; that span reads LGVGTFGKV. The Proton acceptor role is filled by aspartate 139. A Phosphothreonine; by LKB1 and CaMKK2 modification is found at threonine 172. A Phosphothreonine modification is found at threonine 258. The AIS stretch occupies residues 291 to 376; that stretch reads EAVKEVCEKF…PERMPPLIAD (86 aa). Position 377 is a phosphoserine (serine 377). The interval 477-521 is disordered; the sequence is VEQRSGSSTPQRSCSAAGLHRPRSSFDSTTAESHSLSGSLTGSLT. The segment covering 480 to 490 has biased composition (polar residues); the sequence is RSGSSTPQRSC. At serine 491 the chain carries Phosphoserine. Over residues 501–510 the composition is skewed to polar residues; it reads SFDSTTAESH. The span at 511 to 521 shows a compositional bias: low complexity; the sequence is SLSGSLTGSLT.

It belongs to the protein kinase superfamily. CAMK Ser/Thr protein kinase family. SNF1 subfamily. In terms of assembly, AMPK is a heterotrimer of an alpha catalytic subunit (PRKAA1 or PRKAA2), a beta (PRKAB1 or PRKAB2) and a gamma non-catalytic subunits (PRKAG1, PRKAG2 or PRKAG3). Interacts with FNIP1 and FNIP2. Interacts with DUSP29. Interacts with ARF6. The phosphorylated form at Thr-172 mediated by CamKK2 interacts with ACSS2. Mg(2+) serves as cofactor. In terms of processing, ubiquitinated. Phosphorylated at Thr-172 by STK11/LKB1 in complex with STE20-related adapter-alpha (STRADA) pseudo kinase and CAB39. Also phosphorylated at Thr-172 by CAMKK2; triggered by a rise in intracellular calcium ions, without detectable changes in the AMP/ATP ratio. CAMKK1 can also phosphorylate Thr-172, but at much lower level. Dephosphorylated by protein phosphatase 2A and 2C (PP2A and PP2C). Phosphorylated by ULK1; leading to negatively regulate AMPK activity and suggesting the existence of a regulatory feedback loop between ULK1 and AMPK. Dephosphorylated by PPM1A and PPM1B at Thr-172 (mediated by STK11/LKB1).

It localises to the cytoplasm. The protein resides in the nucleus. It catalyses the reaction L-seryl-[protein] + ATP = O-phospho-L-seryl-[protein] + ADP + H(+). The enzyme catalyses L-threonyl-[protein] + ATP = O-phospho-L-threonyl-[protein] + ADP + H(+). It carries out the reaction L-seryl-[acetyl-CoA carboxylase] + ATP = O-phospho-L-seryl-[acetyl-CoA carboxylase] + ADP + H(+). The catalysed reaction is L-seryl-[3-hydroxy-3-methylglutaryl-coenzyme A reductase] + ATP = O-phospho-L-seryl-[3-hydroxy-3-methylglutaryl-coenzyme A reductase] + ADP + H(+). Activated by phosphorylation on Thr-172. Binding of AMP to non-catalytic gamma subunit (PRKAG1, PRKAG2 or PRKAG3) results in allosteric activation, inducing phosphorylation on Thr-172. AMP-binding to gamma subunit also sustains activity by preventing dephosphorylation of Thr-172. ADP also stimulates Thr-172 phosphorylation, without stimulating already phosphorylated AMPK. ATP promotes dephosphorylation of Thr-172, rendering the enzyme inactive. Under physiological conditions AMPK mainly exists in its inactive form in complex with ATP, which is much more abundant than AMP. Selectively inhibited by compound C (6-[4-(2-Piperidin-1-yl-ethoxy)-phenyl)]-3-pyridin-4-yl-pyyrazolo[1,5-a] pyrimidine. Activated by resveratrol, a natural polyphenol present in red wine, and S17834, a synthetic polyphenol. Salicylate/aspirin directly activates kinase activity, primarily by inhibiting Thr-172 dephosphorylation. In terms of biological role, catalytic subunit of AMP-activated protein kinase (AMPK), an energy sensor protein kinase that plays a key role in regulating cellular energy metabolism. In response to reduction of intracellular ATP levels, AMPK activates energy-producing pathways and inhibits energy-consuming processes: inhibits protein, carbohydrate and lipid biosynthesis, as well as cell growth and proliferation. AMPK acts via direct phosphorylation of metabolic enzymes, and by longer-term effects via phosphorylation of transcription regulators. Regulates lipid synthesis by phosphorylating and inactivating lipid metabolic enzymes such as ACACA, ACACB, GYS1, HMGCR and LIPE; regulates fatty acid and cholesterol synthesis by phosphorylating acetyl-CoA carboxylase (ACACA and ACACB) and hormone-sensitive lipase (LIPE) enzymes, respectively. Promotes lipolysis of lipid droplets by mediating phosphorylation of isoform 1 of CHKA (CHKalpha2). Regulates insulin-signaling and glycolysis by phosphorylating IRS1, PFKFB2 and PFKFB3. Involved in insulin receptor/INSR internalization. AMPK stimulates glucose uptake in muscle by increasing the translocation of the glucose transporter SLC2A4/GLUT4 to the plasma membrane, possibly by mediating phosphorylation of TBC1D4/AS160. Regulates transcription and chromatin structure by phosphorylating transcription regulators involved in energy metabolism such as CRTC2/TORC2, FOXO3, histone H2B, HDAC5, MEF2C, MLXIPL/ChREBP, EP300, HNF4A, p53/TP53, SREBF1, SREBF2 and PPARGC1A. Acts as a key regulator of glucose homeostasis in liver by phosphorylating CRTC2/TORC2, leading to CRTC2/TORC2 sequestration in the cytoplasm. In response to stress, phosphorylates 'Ser-36' of histone H2B (H2BS36ph), leading to promote transcription. Acts as a key regulator of cell growth and proliferation by phosphorylating FNIP1, TSC2, RPTOR, WDR24 and ATG1/ULK1: in response to nutrient limitation, negatively regulates the mTORC1 complex by phosphorylating RPTOR component of the mTORC1 complex and by phosphorylating and activating TSC2. Also phosphorylates and inhibits GATOR2 subunit WDR24 in response to nutrient limitation, leading to suppress glucose-mediated mTORC1 activation. In response to energetic stress, phosphorylates FNIP1, inactivating the non-canonical mTORC1 signaling, thereby promoting nuclear translocation of TFEB and TFE3, and inducing transcription of lysosomal or autophagy genes. In response to nutrient limitation, promotes autophagy by phosphorylating and activating ATG1/ULK1. In that process also activates WDR45/WIPI4. Phosphorylates CASP6, thereby preventing its autoprocessing and subsequent activation. AMPK also acts as a regulator of circadian rhythm by mediating phosphorylation of CRY1, leading to destabilize it. May regulate the Wnt signaling pathway by phosphorylating CTNNB1, leading to stabilize it. Also acts as a regulator of cellular polarity by remodeling the actin cytoskeleton; probably by indirectly activating myosin. Also phosphorylates CFTR, EEF2K, KLC1, NOS3 and SLC12A1. Plays an important role in the differential regulation of pro-autophagy (composed of PIK3C3, BECN1, PIK3R4 and UVRAG or ATG14) and non-autophagy (composed of PIK3C3, BECN1 and PIK3R4) complexes, in response to glucose starvation. Can inhibit the non-autophagy complex by phosphorylating PIK3C3 and can activate the pro-autophagy complex by phosphorylating BECN1. Upon glucose starvation, promotes ARF6 activation in a kinase-independent manner leading to cell migration. Upon glucose deprivation mediates the phosphorylation of ACSS2 at 'Ser-659', which exposes the nuclear localization signal of ACSS2, required for its interaction with KPNA1 and nuclear translocation. Upon stress, regulates mitochondrial fragmentation through phosphorylation of MTFR1L. The protein is 5'-AMP-activated protein kinase catalytic subunit alpha-2 (PRKAA2) of Pongo abelii (Sumatran orangutan).